The following is a 383-amino-acid chain: Sphingosine kinase 1 (383 aa).

Residues Pro-12–Ser-159 enclose the DAGKc domain. ATP-binding positions include Asn-22–Arg-24 and Thr-54–Asn-58. Ser-79 to Gly-82 contributes to the substrate binding site. Asp-81 acts as the Proton donor/acceptor in catalysis. ATP-binding positions include Glu-86 and Gly-111 to Gly-113. 2 consecutive short sequence motifs (nuclear export signal) follow at residues Leu-147 to Leu-155 and Arg-161 to Leu-169. Substrate is bound at residue Asp-178. 2 residues coordinate ATP: Arg-185 and Arg-191. Thr-193 carries the phosphothreonine modification. Ser-225 is modified (phosphoserine). Residue Asp-340–Glu-342 participates in ATP binding. Residues Gly-363–Ile-383 form a disordered region. A compositionally biased stretch (basic and acidic residues) spans Asp-372 to Ile-383.

Interacts with ACY1. Binds to calmodulin. Interacts with SPHKAP. Interacts with CIB1, the interaction occurs in a calcium-dependent manner. Interacts with TRAF2. Interacts with EEF1A1; the interaction enhances SPHK1 kinase activity. It depends on Mg(2+) as a cofactor. Expressed in microglia (at protein level).

The protein resides in the cytoplasm. Its subcellular location is the nucleus. It localises to the cell membrane. The protein localises to the endosome membrane. It is found in the membrane. The protein resides in the clathrin-coated pit. Its subcellular location is the synapse. It carries out the reaction a sphingoid base + ATP = a sphingoid 1-phosphate + ADP + H(+). The enzyme catalyses L-seryl-[protein] + acetyl-CoA = O-acetyl-L-seryl-[protein] + CoA. It catalyses the reaction sphinganine + ATP = sphinganine 1-phosphate + ADP + H(+). The catalysed reaction is sphing-4-enine + ATP = sphing-4-enine 1-phosphate + ADP + H(+). It carries out the reaction 1-O-hexadecyl-2-amino-sn-glycerol + ATP = 1-O-hexadecyl-2-desoxy-2-amino-sn-glycero-3-phosphate + ADP + H(+). Acetyltransferase activity increases in presence of the kinase substrate, sphingosine. In Purkinje cells, kinase activity on sphingosine increases in presence of VEGFA. In neurons, kinase activity increases during the first 24h in presence of Amyloid-beta protein 42 to decrease after 96h. In terms of biological role, catalyzes the phosphorylation of sphingosine to form sphingosine 1-phosphate (SPP), a lipid mediator with both intra- and extracellular functions. Also acts on D-erythro-sphingosine and to a lesser extent sphinganine, but not other lipids, such as D,L-threo-dihydrosphingosine, N,N-dimethylsphingosine, diacylglycerol, ceramide, or phosphatidylinositol. In contrast to proapoptotic SPHK2, has a negative effect on intracellular ceramide levels, enhances cell growth and inhibits apoptosis. Involved in the regulation of inflammatory response and neuroinflammation. Via the product sphingosine 1-phosphate, stimulates TRAF2 E3 ubiquitin ligase activity, and promotes activation of NF-kappa-B in response to TNF signaling leading to IL17 secretion. In response to TNF and in parallel to NF-kappa-B activation, negatively regulates RANTES induction through p38 MAPK signaling pathway. Involved in endocytic membrane trafficking induced by sphingosine, recruited to dilate endosomes, also plays a role on later stages of endosomal maturation and membrane fusion independently of its kinase activity. In Purkinje cells, seems to be also involved in the regulation of autophagosome-lysosome fusion upon VEGFA. Has serine acetyltransferase activity on PTGS2/COX2 in an acetyl-CoA dependent manner. The acetyltransferase activity increases in presence of the kinase substrate, sphingosine. During neuroinflammation, through PTGS2 acetylation, promotes neuronal secretion of specialized preresolving mediators (SPMs), especially 15-R-lipoxin A4, which results in an increase of phagocytic microglia. This Rattus norvegicus (Rat) protein is Sphingosine kinase 1 (Sphk1).